Here is a 134-residue protein sequence, read N- to C-terminus: C-C motif chemokine 21 (134 aa).

A signal peptide spans 1-23 (MAQSLALSLLILVLAFGIPRTQG). 3 disulfides stabilise this stretch: Cys-31–Cys-57, Cys-32–Cys-75, and Cys-103–Cys-122. Positions 88 to 134 (QHLDKTPSPQKPAQGCRKDRGASKTGKKGKGSKGCKRTERSQTPKGP) are disordered. The segment at 98–134 (KPAQGCRKDRGASKTGKKGKGSKGCKRTERSQTPKGP) is C-terminal basic extension. The span at 112-122 (TGKKGKGSKGC) shows a compositional bias: basic residues. Over residues 123-134 (KRTERSQTPKGP) the composition is skewed to basic and acidic residues.

This sequence belongs to the intercrine beta (chemokine CC) family. As to quaternary structure, monomer. Binds to CCR7. Interacts with PDPN; relocalizes PDPN to the basolateral membrane. Interacts with TNFAIP6 (via Link domain). Interacts with GPR174. As to expression, highly expressed in high endothelial venules of lymph nodes, spleen and appendix. Intermediate levels found in small intestine, thyroid gland and trachea. Low level expression in thymus, bone marrow, liver, and pancreas. Also found in tonsil, fetal heart and fetal spleen.

It localises to the secreted. Inhibits hemopoiesis and stimulates chemotaxis. Chemotactic in vitro for thymocytes and activated T-cells, but not for B-cells, macrophages, or neutrophils. Shows preferential activity towards naive T-cells. May play a role in mediating homing of lymphocytes to secondary lymphoid organs. Binds to atypical chemokine receptor ACKR4 and mediates the recruitment of beta-arrestin (ARRB1/2) to ACKR4. This chain is C-C motif chemokine 21 (CCL21), found in Homo sapiens (Human).